The sequence spans 212 residues: Fibrillarin-like rRNA/tRNA 2'-O-methyltransferase (212 aa).

Residues 76-77 (TT), 94-95 (EL), 119-120 (DA), and 139-142 (DIAQ) contribute to the S-adenosyl-L-methionine site.

The protein belongs to the methyltransferase superfamily. Fibrillarin family. Interacts with nop5. Component of box C/D small ribonucleoprotein (sRNP) particles that contain rpl7ae, FlpA and nop5, plus a guide RNA.

Its function is as follows. Involved in pre-rRNA and tRNA processing. Utilizes the methyl donor S-adenosyl-L-methionine to catalyze the site-specific 2'-hydroxyl methylation of ribose moieties in rRNA and tRNA. Site specificity is provided by a guide RNA that base pairs with the substrate. Methylation occurs at a characteristic distance from the sequence involved in base pairing with the guide RNA. The polypeptide is Fibrillarin-like rRNA/tRNA 2'-O-methyltransferase (Picrophilus torridus (strain ATCC 700027 / DSM 9790 / JCM 10055 / NBRC 100828 / KAW 2/3)).